The following is a 550-amino-acid chain: Chaperonin GroEL (550 aa).

ATP contacts are provided by residues 30–33, lysine 51, 87–91, glycine 415, 479–481, and aspartate 495; these read TLGP, DGTTT, and NAA.

Belongs to the chaperonin (HSP60) family. Forms a cylinder of 14 subunits composed of two heptameric rings stacked back-to-back. Interacts with the co-chaperonin GroES.

It is found in the cytoplasm. It catalyses the reaction ATP + H2O + a folded polypeptide = ADP + phosphate + an unfolded polypeptide.. Functionally, together with its co-chaperonin GroES, plays an essential role in assisting protein folding. The GroEL-GroES system forms a nano-cage that allows encapsulation of the non-native substrate proteins and provides a physical environment optimized to promote and accelerate protein folding. This Polynucleobacter asymbioticus (strain DSM 18221 / CIP 109841 / QLW-P1DMWA-1) (Polynucleobacter necessarius subsp. asymbioticus) protein is Chaperonin GroEL.